We begin with the raw amino-acid sequence, 352 residues long: N-acetyl-gamma-glutamyl-phosphate reductase (352 aa).

Cys155 is a catalytic residue.

It belongs to the NAGSA dehydrogenase family. Type 1 subfamily.

It localises to the cytoplasm. The catalysed reaction is N-acetyl-L-glutamate 5-semialdehyde + phosphate + NADP(+) = N-acetyl-L-glutamyl 5-phosphate + NADPH + H(+). It participates in amino-acid biosynthesis; L-arginine biosynthesis; N(2)-acetyl-L-ornithine from L-glutamate: step 3/4. Functionally, catalyzes the NADPH-dependent reduction of N-acetyl-5-glutamyl phosphate to yield N-acetyl-L-glutamate 5-semialdehyde. In Rippkaea orientalis (strain PCC 8801 / RF-1) (Cyanothece sp. (strain PCC 8801)), this protein is N-acetyl-gamma-glutamyl-phosphate reductase.